Here is a 75-residue protein sequence, read N- to C-terminus: Bacteriocin lactacin-F subunit LafA (75 aa).

Positions 1-18 (MKQFNYLSHKDLAVVVGG) are excised as a propeptide.

It belongs to the bacteriocin class IIB family. In terms of assembly, this bacteriocin depends upon the complementation of two peptides for activity: LafA and LafX. Associated with a 180 kDa bacteriocin complex.

Functionally, heat stable bacteriocin active against Enterococcus faecalis and other Lactobacilli. The chain is Bacteriocin lactacin-F subunit LafA (lafA) from Lactobacillus johnsonii (strain CNCM I-12250 / La1 / NCC 533).